Here is a 357-residue protein sequence, read N- to C-terminus: Glucose-6-phosphatase catalytic subunit 1 (357 aa).

Topologically, residues 1–28 are lumenal; the sequence is MEKGMNVLHDFGIQSTHYLQVNYQDSQD. The chain crosses the membrane as a helical span at residues 29–49; the sequence is WFILVSVIADLRNAFYVLFPI. At 50 to 60 the chain is on the cytoplasmic side; sequence WFHLREAVGIK. Residues 61 to 81 form a helical membrane-spanning segment; it reads LLWVAVIGDWLNLVFKWILFG. Residues 82-117 lie on the Lumenal side of the membrane; the sequence is QRPYWWVMDTDYYSNASVPLIKQFPVTCETGPGSPS. A substrate-binding site is contributed by arginine 83. A glycan (N-linked (GlcNAc...) asparagine) is linked at asparagine 96. The helical transmembrane segment at 118–138 threads the bilayer; sequence GHAMGTAGVYYVMVTSTLSMF. Histidine 119 functions as the Proton donor in the catalytic mechanism. The Cytoplasmic segment spans residues 139 to 147; the sequence is RGKKKPTYR. Residues 148–168 traverse the membrane as a helical segment; it reads FRCLNVILWLGFWAVQLNVCL. Residues 169-170 are Lumenal-facing; the sequence is SR. Arginine 170 serves as a coordination point for substrate. A helical transmembrane segment spans residues 171–191; that stretch reads IYLAAHFPHQVVAGVLSGIAV. Catalysis depends on histidine 176, which acts as the Nucleophile. At 192–209 the chain is on the cytoplasmic side; that stretch reads AETFRHIQSIYNASLKKY. The helical transmembrane segment at 210–230 threads the bilayer; the sequence is FFITFFLLSFAIGFYLLLKGL. The Lumenal portion of the chain corresponds to 231-254; the sequence is GVDLLWTLEKARRWCERPEWVHID. The helical transmembrane segment at 255–275 threads the bilayer; that stretch reads TTPFASLLKNVGTLFGLGLAL. The Cytoplasmic portion of the chain corresponds to 276 to 291; it reads NSSMYRESCKGTLSKW. Residues 292 to 312 traverse the membrane as a helical segment; it reads FPFRLSCIVVSLILLHLFDSL. Residues 313 to 320 lie on the Lumenal side of the membrane; that stretch reads KPPSQIEL. Residues 321–341 traverse the membrane as a helical segment; the sequence is IFYVLSFCKSAAVPLASVSLI. Residues 342–357 are Cytoplasmic-facing; sequence PYCLARVLGQPDKKSL. Residues 354-357 carry the Prevents secretion from ER motif; it reads KKSL.

Belongs to the glucose-6-phosphatase family.

The protein localises to the endoplasmic reticulum membrane. The catalysed reaction is D-glucose 6-phosphate + H2O = D-glucose + phosphate. Its pathway is carbohydrate biosynthesis; gluconeogenesis. In terms of biological role, hydrolyzes glucose-6-phosphate to glucose in the endoplasmic reticulum. Forms with the glucose-6-phosphate transporter (SLC37A4/G6PT) the complex responsible for glucose production in the terminal step of glycogenolysis and gluconeogenesis. Hence, it is the key enzyme in homeostatic regulation of blood glucose levels. The chain is Glucose-6-phosphatase catalytic subunit 1 (G6PC1) from Felis catus (Cat).